The sequence spans 607 residues: WD repeat-containing protein 1-B (607 aa).

WD repeat units follow at residues 4-45 (EIKK…IRNI), 48-87 (PAIA…IWDT), 93-135 (LLKY…LWDT), 138-176 (SVGE…FFEG), 180-218 (KFKF…LYDG), 224-263 (VCSL…IWDV), 270-306 (TTFN…YLDK), 311-351 (KPFR…YWDA), 358-408 (TFTG…KMDV), 432-474 (LKDK…LYSI), 480-518 (KDEG…VFSV), 523-561 (SEHN…VWTL), and 566-604 (TRIK…QWTV).

This sequence belongs to the WD repeat AIP1 family.

The protein localises to the cell membrane. It is found in the cytoplasm. Its subcellular location is the cytoskeleton. The protein resides in the nucleus. Induces disassembly of actin filaments in conjunction with ADF/cofilin family proteins. Doesn't sever actin filaments alone, but caps the barbed ends of filaments severed by cofilin, which blocks annealing and depolymerization and allows more extensive severing by cofilin. In Xenopus laevis (African clawed frog), this protein is WD repeat-containing protein 1-B (wdr1-b).